The sequence spans 180 residues: ATP-dependent protease subunit HslV (180 aa).

Threonine 6 is a catalytic residue. Na(+)-binding residues include alanine 164, cysteine 167, and threonine 170.

It belongs to the peptidase T1B family. HslV subfamily. A double ring-shaped homohexamer of HslV is capped on each side by a ring-shaped HslU homohexamer. The assembly of the HslU/HslV complex is dependent on binding of ATP.

The protein localises to the cytoplasm. The catalysed reaction is ATP-dependent cleavage of peptide bonds with broad specificity.. Its activity is regulated as follows. Allosterically activated by HslU binding. Its function is as follows. Protease subunit of a proteasome-like degradation complex believed to be a general protein degrading machinery. This Borrelia duttonii (strain Ly) protein is ATP-dependent protease subunit HslV.